The following is a 34-amino-acid chain: METNDLGFVASLLFVLVPTVFLIILFIQTNSKEG.

Residues Gly7–Ile27 form a helical membrane-spanning segment.

It belongs to the PsbM family. As to quaternary structure, PSII is composed of 1 copy each of membrane proteins PsbA, PsbB, PsbC, PsbD, PsbE, PsbF, PsbH, PsbI, PsbJ, PsbK, PsbL, PsbM, PsbT, PsbX, PsbY, PsbZ, Psb30/Ycf12, peripheral proteins PsbO, CyanoQ (PsbQ), PsbU, PsbV and a large number of cofactors. It forms dimeric complexes.

The protein localises to the cellular thylakoid membrane. Its function is as follows. One of the components of the core complex of photosystem II (PSII). PSII is a light-driven water:plastoquinone oxidoreductase that uses light energy to abstract electrons from H(2)O, generating O(2) and a proton gradient subsequently used for ATP formation. It consists of a core antenna complex that captures photons, and an electron transfer chain that converts photonic excitation into a charge separation. This subunit is found at the monomer-monomer interface. The polypeptide is Photosystem II reaction center protein M (Synechococcus sp. (strain WH7803)).